Consider the following 62-residue polypeptide: YTLKCNKLVPLFYKTCPAGKNLCYKMFMVSNKTVPVKRGCIDVCPKNSALVKYVCCNTDRCN.

Positions 1 to 2 (YT) are cleaved as a signal peptide. Cystine bridges form between cysteine 5–cysteine 23, cysteine 16–cysteine 40, cysteine 44–cysteine 55, and cysteine 56–cysteine 61.

The protein belongs to the three-finger toxin family. Short-chain subfamily. Type IA cytotoxin sub-subfamily. Monomer in solution; Homodimer and oligomer in the presence of negatively charged lipids forming a pore with a size ranging between 20 and 30 Angstroms. Expressed by the venom gland.

It is found in the secreted. Its subcellular location is the target cell membrane. Shows cytolytic activity on many different cells by forming pore in lipid membranes. In vivo, increases heart rate or kills the animal by cardiac arrest. In addition, it binds to heparin with high affinity, interacts with Kv channel-interacting protein 1 (KCNIP1) in a calcium-independent manner, and binds to integrin alpha-V/beta-3 (ITGAV/ITGB3) with moderate affinity. The polypeptide is Cytotoxin 6 (Naja sputatrix (Malayan spitting cobra)).